The chain runs to 238 residues: Probable transcriptional regulatory protein YeeN (238 aa).

This sequence belongs to the TACO1 family. YeeN subfamily.

The protein resides in the cytoplasm. In Salmonella choleraesuis (strain SC-B67), this protein is Probable transcriptional regulatory protein YeeN.